The following is a 160-amino-acid chain: Nucleotide-binding protein Tola_0795 (160 aa).

It belongs to the YajQ family.

In terms of biological role, nucleotide-binding protein. The protein is Nucleotide-binding protein Tola_0795 of Tolumonas auensis (strain DSM 9187 / NBRC 110442 / TA 4).